Reading from the N-terminus, the 441-residue chain is UPF0761 membrane protein RSc1559 (441 aa).

Helical transmembrane passes span 44–64 (VLSL…FPMF), 101–121 (GLTA…MLTV), 141–161 (VLVF…SLSV), 182–202 (VVVG…LYVF), 207–227 (LVAW…FEIA), and 248–268 (FAAL…TLLG).

Belongs to the UPF0761 family.

The protein resides in the cell inner membrane. The chain is UPF0761 membrane protein RSc1559 from Ralstonia nicotianae (strain ATCC BAA-1114 / GMI1000) (Ralstonia solanacearum).